We begin with the raw amino-acid sequence, 525 residues long: GMP synthase [glutamine-hydrolyzing] (525 aa).

Positions 9–207 (RILILDFGSQ…VLDICGCAAL (199 aa)) constitute a Glutamine amidotransferase type-1 domain. Cys86 (nucleophile) is an active-site residue. Active-site residues include His181 and Glu183. Residues 208-400 (WTPSNIVDDA…LGLPYDMVYR (193 aa)) form the GMPS ATP-PPase domain. 235–241 (SGGVDSS) serves as a coordination point for ATP.

Homodimer.

The enzyme catalyses XMP + L-glutamine + ATP + H2O = GMP + L-glutamate + AMP + diphosphate + 2 H(+). The protein operates within purine metabolism; GMP biosynthesis; GMP from XMP (L-Gln route): step 1/1. Functionally, catalyzes the synthesis of GMP from XMP. The polypeptide is GMP synthase [glutamine-hydrolyzing] (Pseudomonas aeruginosa (strain UCBPP-PA14)).